The chain runs to 401 residues: Mu-type opioid receptor (401 aa).

Residues 1–69 (MDSGAVPTNA…CPSAGSPSMI (69 aa)) lie on the Extracellular side of the membrane. Asn-9, Asn-12, Asn-34, Asn-41, and Asn-49 each carry an N-linked (GlcNAc...) asparagine glycan. A helical membrane pass occupies residues 70-94 (TAIIIMALYSIVCVVGLFGNFLVMY). Topologically, residues 95–107 (VIVRYTKMKTATN) are cytoplasmic. Residues 108-132 (IYIFNLALADALATSTLPFQSVNYL) form a helical membrane-spanning segment. The Extracellular portion of the chain corresponds to 133–143 (MGTWPFGTILC). The cysteines at positions 143 and 220 are disulfide-linked. The helical transmembrane segment at 144-166 (KIVISIDYYNMFTSIFTLCTMSV) threads the bilayer. Residues 167–186 (DRYIAVCHPVKALDLRTPRN) lie on the Cytoplasmic side of the membrane. Position 169 is a phosphotyrosine (Tyr-169). Residues 187–208 (AKIINICNWILSSAIGLPVMFM) traverse the membrane as a helical segment. Topologically, residues 209-231 (ATTKYRQGSIDCTLTFSHPTWYW) are extracellular. Residues 232-256 (ENLLKICVFIFAFIMPILIITVCYG) traverse the membrane as a helical segment. The Cytoplasmic segment spans residues 257–280 (LMILRLKSVRMLSGSKEKDRNLRR). A helical transmembrane segment spans residues 281 to 307 (ITRMVLVVVAVFIVCWTPIHIYVIIKA). The Extracellular portion of the chain corresponds to 308 to 315 (LITIPETT). A helical membrane pass occupies residues 316–339 (FQTVSWHFCIALGYTNSCLNPVLY). Positions 335 to 339 (NPVLY) match the NPxxY; plays a role in stabilizing the activated conformation of the receptor motif. Topologically, residues 340-401 (AFLDENFKRC…NLEAETTPLP (62 aa)) are cytoplasmic. Cys-354 is lipidated: S-palmitoyl cysteine. The segment at 365–389 (NSTRIRQNTRDHPSTANTVDRTNHQ) is disordered. The residue at position 366 (Ser-366) is a Phosphoserine. At Thr-373 the chain carries Phosphothreonine. Ser-378 is subject to Phosphoserine. At Thr-397 the chain carries Phosphothreonine.

Belongs to the G-protein coupled receptor 1 family. In terms of assembly, forms homooligomers and heterooligomers with other GPCRs, such as OPRD1, OPRK1, OPRL1, NPFFR2, ADRA2A, SSTR2, CNR1 and CCR5 (probably in dimeric forms). Interacts with heterotrimeric G proteins; interaction with a heterotrimeric complex containing GNAI1, GNB1 and GNG2 stabilizes the active conformation of the receptor and increases its affinity for endomorphin-2, the synthetic opioid peptide DAMGO and for morphinan agonists. Interacts with PPL; the interaction disrupts agonist-mediated G-protein activation. Interacts (via C-terminus) with DNAJB4 (via C-terminus). Interacts with calmodulin; the interaction inhibits the constitutive activity of OPRM1; it abolishes basal and attenuates agonist-stimulated G-protein coupling. Interacts with FLNA, PLD2, RANBP9 and WLS and GPM6A. Interacts with RTP4. Interacts with SYP and GNAS. Interacts with RGS9, RGS17, RGS20, RGS4, PPP1R9B and HINT1. Phosphorylated. Differentially phosphorylated in basal and agonist-induced conditions. Agonist-mediated phosphorylation modulates receptor internalization. Phosphorylated by GRK2 in a agonist-dependent manner. Phosphorylation at Tyr-169 requires receptor activation, is dependent on non-receptor protein tyrosine kinase Src and results in a decrease in agonist efficacy by reducing G-protein coupling efficiency. Phosphorylated on tyrosine residues; the phosphorylation is involved in agonist-induced G-protein-independent receptor down-regulation. Phosphorylation at Ser-378 is involved in G-protein-dependent but not beta-arrestin-dependent activation of the ERK pathway. In terms of processing, ubiquitinated. A basal ubiquitination seems not to be related to degradation. Ubiquitination is increased upon formation of OPRM1:OPRD1 oligomers leading to proteasomal degradation; the ubiquitination is diminished by RTP4.

It localises to the cell membrane. Its subcellular location is the cell projection. The protein resides in the axon. It is found in the perikaryon. The protein localises to the dendrite. It localises to the endosome. In terms of biological role, receptor for endogenous opioids such as beta-endorphin and endomorphin. Receptor for natural and synthetic opioids including morphine, heroin, DAMGO, fentanyl, etorphine, buprenorphin and methadone. Also activated by enkephalin peptides, such as Met-enkephalin or Met-enkephalin-Arg-Phe, with higher affinity for Met-enkephalin-Arg-Phe. Agonist binding to the receptor induces coupling to an inactive GDP-bound heterotrimeric G-protein complex and subsequent exchange of GDP for GTP in the G-protein alpha subunit leading to dissociation of the G-protein complex with the free GTP-bound G-protein alpha and the G-protein beta-gamma dimer activating downstream cellular effectors. The agonist- and cell type-specific activity is predominantly coupled to pertussis toxin-sensitive G(i) and G(o) G alpha proteins, GNAI1, GNAI2, GNAI3 and GNAO1, and to a lesser extent to pertussis toxin-insensitive G alpha proteins GNAZ and GNA15. They mediate an array of downstream cellular responses, including inhibition of adenylate cyclase activity and both N-type and L-type calcium channels, activation of inward rectifying potassium channels, mitogen-activated protein kinase (MAPK), phospholipase C (PLC), phosphoinositide/protein kinase (PKC), phosphoinositide 3-kinase (PI3K) and regulation of NF-kappa-B. Also couples to adenylate cyclase stimulatory G alpha proteins. The selective temporal coupling to G-proteins and subsequent signaling can be regulated by RGSZ proteins, such as RGS9, RGS17 and RGS4. Phosphorylation by members of the GPRK subfamily of Ser/Thr protein kinases and association with beta-arrestins is involved in short-term receptor desensitization. Beta-arrestins associate with the GPRK-phosphorylated receptor and uncouple it from the G-protein thus terminating signal transduction. The phosphorylated receptor is internalized through endocytosis via clathrin-coated pits which involves beta-arrestins. The activation of the ERK pathway occurs either in a G-protein-dependent or a beta-arrestin-dependent manner and is regulated by agonist-specific receptor phosphorylation. Acts as a class A G-protein coupled receptor (GPCR) which dissociates from beta-arrestin at or near the plasma membrane and undergoes rapid recycling. Receptor down-regulation pathways are varying with the agonist and occur dependent or independent of G-protein coupling. Endogenous ligands induce rapid desensitization, endocytosis and recycling. Heterooligomerization with other GPCRs can modulate agonist binding, signaling and trafficking properties. Involved in neurogenesis. This is Mu-type opioid receptor (OPRM1) from Bos taurus (Bovine).